A 338-amino-acid chain; its full sequence is Ketol-acid reductoisomerase (NADP(+)) (338 aa).

The KARI N-terminal Rossmann domain maps to 1–181 (MKVFYDKDAD…GGGRAGIIET (181 aa)). Residues 24-27 (YGSQ), R47, and S52 each bind NADP(+). The active site involves H107. Residue G133 coordinates NADP(+). The KARI C-terminal knotted domain maps to 182 to 327 (NFREETETDL…EKLRAMMPWI (146 aa)). Positions 190, 194, 226, and 230 each coordinate Mg(2+). S251 provides a ligand contact to substrate.

Belongs to the ketol-acid reductoisomerase family. Requires Mg(2+) as cofactor.

The enzyme catalyses (2R)-2,3-dihydroxy-3-methylbutanoate + NADP(+) = (2S)-2-acetolactate + NADPH + H(+). The catalysed reaction is (2R,3R)-2,3-dihydroxy-3-methylpentanoate + NADP(+) = (S)-2-ethyl-2-hydroxy-3-oxobutanoate + NADPH + H(+). It participates in amino-acid biosynthesis; L-isoleucine biosynthesis; L-isoleucine from 2-oxobutanoate: step 2/4. The protein operates within amino-acid biosynthesis; L-valine biosynthesis; L-valine from pyruvate: step 2/4. In terms of biological role, involved in the biosynthesis of branched-chain amino acids (BCAA). Catalyzes an alkyl-migration followed by a ketol-acid reduction of (S)-2-acetolactate (S2AL) to yield (R)-2,3-dihydroxy-isovalerate. In the isomerase reaction, S2AL is rearranged via a Mg-dependent methyl migration to produce 3-hydroxy-3-methyl-2-ketobutyrate (HMKB). In the reductase reaction, this 2-ketoacid undergoes a metal-dependent reduction by NADPH to yield (R)-2,3-dihydroxy-isovalerate. The polypeptide is Ketol-acid reductoisomerase (NADP(+)) (Cupriavidus pinatubonensis (strain JMP 134 / LMG 1197) (Cupriavidus necator (strain JMP 134))).